The following is a 263-amino-acid chain: Small ribosomal subunit protein uS2m (263 aa).

Residues 1–15 (MLSRKLSPEQLVARR) constitute a mitochondrion transit peptide.

Belongs to the universal ribosomal protein uS2 family. In terms of assembly, component of the mitochondrial small ribosomal subunit (mt-SSU). Mature yeast 74S mitochondrial ribosomes consist of a small (37S) and a large (54S) subunit. The 37S small subunit contains a 15S ribosomal RNA (15S mt-rRNA) and at least 32 different proteins. The 54S large subunit contains a 21S rRNA (21S mt-rRNA) and at least 45 different proteins.

The protein resides in the mitochondrion. Functionally, component of the mitochondrial ribosome (mitoribosome), a dedicated translation machinery responsible for the synthesis of mitochondrial genome-encoded proteins, including at least some of the essential transmembrane subunits of the mitochondrial respiratory chain. The mitoribosomes are attached to the mitochondrial inner membrane and translation products are cotranslationally integrated into the membrane. The sequence is that of Small ribosomal subunit protein uS2m from Schizosaccharomyces pombe (strain 972 / ATCC 24843) (Fission yeast).